The chain runs to 197 residues: Nucleoid occlusion factor SlmA (197 aa).

Positions 7-67 (INRREHILQC…GLIDFIEESL (61 aa)) constitute an HTH tetR-type domain. A DNA-binding region (H-T-H motif) is located at residues 30-49 (TTAKLAAEVGVSEAALYRHF).

It belongs to the nucleoid occlusion factor SlmA family. Homodimer. Interacts with FtsZ.

It localises to the cytoplasm. It is found in the nucleoid. Functionally, required for nucleoid occlusion (NO) phenomenon, which prevents Z-ring formation and cell division over the nucleoid. Acts as a DNA-associated cell division inhibitor that binds simultaneously chromosomal DNA and FtsZ, and disrupts the assembly of FtsZ polymers. SlmA-DNA-binding sequences (SBS) are dispersed on non-Ter regions of the chromosome, preventing FtsZ polymerization at these regions. This chain is Nucleoid occlusion factor SlmA, found in Shewanella sediminis (strain HAW-EB3).